The sequence spans 110 residues: Antimicrobial peptide microplusin (110 aa).

Residues 1 to 20 form the signal peptide; sequence MKAIFVSALLVVALVASTSA. 3 disulfide bridges follow: C26–C72, C39–C100, and C61–C66.

As to expression, expressed in the hemocytes, fat body and ovaries.

It is found in the secreted. Its function is as follows. Has bacteriostatic activity against the Gram-positive bacterium M.luteus, but not against Gram-negative bacterium E.coli SBS363. Has fungistatic activity against C.neoformans, but not C.albicans. Binds and sequesters copper and iron ions. Copper-chelating is crucial for antimicrobial activity against M.luteus. The protein is Antimicrobial peptide microplusin of Rhipicephalus microplus (Cattle tick).